The primary structure comprises 34 residues: Photosystem II reaction center protein M (34 aa).

A helical membrane pass occupies residues 5-25 (ILAFIATALFILVPTAFLLII).

Belongs to the PsbM family. PSII is composed of 1 copy each of membrane proteins PsbA, PsbB, PsbC, PsbD, PsbE, PsbF, PsbH, PsbI, PsbJ, PsbK, PsbL, PsbM, PsbT, PsbX, PsbY, PsbZ, Psb30/Ycf12, at least 3 peripheral proteins of the oxygen-evolving complex and a large number of cofactors. It forms dimeric complexes.

The protein localises to the plastid. The protein resides in the chloroplast thylakoid membrane. Functionally, one of the components of the core complex of photosystem II (PSII). PSII is a light-driven water:plastoquinone oxidoreductase that uses light energy to abstract electrons from H(2)O, generating O(2) and a proton gradient subsequently used for ATP formation. It consists of a core antenna complex that captures photons, and an electron transfer chain that converts photonic excitation into a charge separation. This subunit is found at the monomer-monomer interface. The polypeptide is Photosystem II reaction center protein M (Coffea arabica (Arabian coffee)).